The sequence spans 403 residues: Shaggy-related protein kinase GSK4 (403 aa).

The region spanning 71–355 is the Protein kinase domain; the sequence is YMAERVVGTG…ALEACAHSFF (285 aa). ATP is bound by residues 77–85 and lysine 100; that span reads VGTGSFGVV. Aspartate 196 serves as the catalytic Proton acceptor.

The protein belongs to the protein kinase superfamily. CMGC Ser/Thr protein kinase family. GSK-3 subfamily. As to quaternary structure, interacts with LIC.

The catalysed reaction is L-seryl-[protein] + ATP = O-phospho-L-seryl-[protein] + ADP + H(+). It carries out the reaction L-threonyl-[protein] + ATP = O-phospho-L-threonyl-[protein] + ADP + H(+). In terms of biological role, probable serine-threonine kinase that may regulate brassinosteroid signaling. The polypeptide is Shaggy-related protein kinase GSK4 (Oryza sativa subsp. japonica (Rice)).